Consider the following 361-residue polypeptide: DNA replication and repair protein RecF (361 aa).

Residue 30 to 37 (GDNAQGKT) participates in ATP binding.

It belongs to the RecF family.

Its subcellular location is the cytoplasm. Functionally, the RecF protein is involved in DNA metabolism; it is required for DNA replication and normal SOS inducibility. RecF binds preferentially to single-stranded, linear DNA. It also seems to bind ATP. This Clostridium novyi (strain NT) protein is DNA replication and repair protein RecF.